Consider the following 639-residue polypeptide: MDNEKQASPPPAAPPLNWRYLLWIILLGIFLISWLGNAGRQAGDEITYTEFKQALHQGKIAKVTLEGQHISGTYHEAGGNIQPEGKDSKGFSTTRPPFDDPELMKLLEQKGVVVQAKSEEPSLWMQAIIGILPWFLILGLIFYVSYRMQQRMMGGGRGGPFGFGKAPVKRFREGSIGVTFEDVAGVENAKRDLREIVDYLKEPGQFKAVGAKIPKGILLVGRPGTGKTLLARAVAGEAGVPFYSISGSDFIEMFVGVGAARVRDMFKAAKEEAPSILFIDEIDSVGRARGTGLGGGHDEREQTLNQILGEMDGFAAHENVVVLAATNRPDVLDPALLRPGRFDRKVVLDLPDKKARQRVLEVHTKNVPLAADVDLERVARRTVGFSGADLANLVNEAALLTGRERKKEVDMDMFNLARDKIVLGAKRETILGEEEKKLVAYHESGHALTAWLLPEADPLHQVSIIPRGMALGVTEQAPEEERHSLSRAYLLDRLGVMLGGRISEKITFGDVTSGAESDLKQATQLARRMVCQWGMSDKIGAAAFSRSEEHVFLGRELSQPRDFSEQTAQIIDDEIRRILSEVERKTENLLQENRAKLDALAKALIEAETLNLVEVEKIFKNVKELPQEGHNEAVATGAG.

Over 1 to 15 the chain is Cytoplasmic; sequence MDNEKQASPPPAAPP. The chain crosses the membrane as a helical span at residues 16–36; that stretch reads LNWRYLLWIILLGIFLISWLG. At 37 to 123 the chain is on the periplasmic side; that stretch reads NAGRQAGDEI…VQAKSEEPSL (87 aa). Residues 124–144 traverse the membrane as a helical segment; it reads WMQAIIGILPWFLILGLIFYV. Over 145–639 the chain is Cytoplasmic; that stretch reads SYRMQQRMMG…HNEAVATGAG (495 aa). An ATP-binding site is contributed by 221 to 228; the sequence is GRPGTGKT. H442 is a Zn(2+) binding site. Residue E443 is part of the active site. Zn(2+) is bound by residues H446 and D518.

The protein in the central section; belongs to the AAA ATPase family. It in the C-terminal section; belongs to the peptidase M41 family. Homohexamer. Requires Zn(2+) as cofactor.

It localises to the cell inner membrane. Acts as a processive, ATP-dependent zinc metallopeptidase for both cytoplasmic and membrane proteins. Plays a role in the quality control of integral membrane proteins. The protein is ATP-dependent zinc metalloprotease FtsH of Nitrosococcus oceani (strain ATCC 19707 / BCRC 17464 / JCM 30415 / NCIMB 11848 / C-107).